The chain runs to 126 residues: Small ribosomal subunit protein uS8 (126 aa).

Belongs to the universal ribosomal protein uS8 family. Part of the 30S ribosomal subunit. Contacts proteins S5 and S12.

One of the primary rRNA binding proteins, it binds directly to 16S rRNA central domain where it helps coordinate assembly of the platform of the 30S subunit. In Nitratidesulfovibrio vulgaris (strain ATCC 29579 / DSM 644 / CCUG 34227 / NCIMB 8303 / VKM B-1760 / Hildenborough) (Desulfovibrio vulgaris), this protein is Small ribosomal subunit protein uS8.